The following is a 310-amino-acid chain: Homoserine kinase (310 aa).

91–101 is a binding site for ATP; sequence PIGSGLGSSAC.

Belongs to the GHMP kinase family. Homoserine kinase subfamily.

It is found in the cytoplasm. The catalysed reaction is L-homoserine + ATP = O-phospho-L-homoserine + ADP + H(+). It functions in the pathway amino-acid biosynthesis; L-threonine biosynthesis; L-threonine from L-aspartate: step 4/5. Functionally, catalyzes the ATP-dependent phosphorylation of L-homoserine to L-homoserine phosphate. The chain is Homoserine kinase from Shigella flexneri serotype 5b (strain 8401).